The primary structure comprises 130 residues: Arginine decarboxylase proenzyme (130 aa).

Serine 78 acts as the Schiff-base intermediate with substrate; via pyruvic acid in catalysis. Pyruvic acid (Ser); by autocatalysis is present on serine 78. Histidine 83 (proton acceptor; for processing activity) is an active-site residue. Catalysis depends on cysteine 98, which acts as the Proton donor; for catalytic activity.

This sequence belongs to the prokaryotic AdoMetDC family. Type 1 subfamily. As to quaternary structure, heterooctamer of four alpha and four beta chains arranged as a tetramer of alpha/beta heterodimers. It depends on pyruvate as a cofactor. Post-translationally, is synthesized initially as an inactive proenzyme. Formation of the active enzyme involves a self-maturation process in which the active site pyruvoyl group is generated from an internal serine residue via an autocatalytic post-translational modification. Two non-identical subunits are generated from the proenzyme in this reaction, and the pyruvate is formed at the N-terminus of the alpha chain, which is derived from the carboxyl end of the proenzyme. The post-translation cleavage follows an unusual pathway, termed non-hydrolytic serinolysis, in which the side chain hydroxyl group of the serine supplies its oxygen atom to form the C-terminus of the beta chain, while the remainder of the serine residue undergoes an oxidative deamination to produce ammonia and the pyruvoyl group blocking the N-terminus of the alpha chain.

The enzyme catalyses L-arginine + H(+) = agmatine + CO2. It participates in amine and polyamine biosynthesis; agmatine biosynthesis; agmatine from L-arginine: step 1/1. Its function is as follows. Specifically catalyzes the decarboxylation of L-arginine to agmatine. Has no S-adenosylmethionine decarboxylase (AdoMetDC) activity. The polypeptide is Arginine decarboxylase proenzyme (Sulfolobus acidocaldarius (strain ATCC 33909 / DSM 639 / JCM 8929 / NBRC 15157 / NCIMB 11770)).